The chain runs to 209 residues: Small ribosomal subunit protein uS4 (209 aa).

A disordered region spans residues 23–46; that stretch reads SRNPLLKKPHPPGQHGMQRKKKSD. One can recognise an S4 RNA-binding domain in the interval 93–153; that stretch reads CRLDNMVYRM…EKSKRLQSVK (61 aa).

This sequence belongs to the universal ribosomal protein uS4 family. In terms of assembly, part of the 30S ribosomal subunit. Contacts protein S5. The interaction surface between S4 and S5 is involved in control of translational fidelity.

In terms of biological role, one of the primary rRNA binding proteins, it binds directly to 16S rRNA where it nucleates assembly of the body of the 30S subunit. Its function is as follows. With S5 and S12 plays an important role in translational accuracy. The polypeptide is Small ribosomal subunit protein uS4 (Chlamydia pneumoniae (Chlamydophila pneumoniae)).